A 157-amino-acid chain; its full sequence is 2-C-methyl-D-erythritol 2,4-cyclodiphosphate synthase (157 aa).

Positions 8 and 10 each coordinate a divalent metal cation. Residues 8–10 (DVH) and 34–35 (HS) each bind 4-CDP-2-C-methyl-D-erythritol 2-phosphate. Residue histidine 42 participates in a divalent metal cation binding. 4-CDP-2-C-methyl-D-erythritol 2-phosphate-binding positions include 56–58 (DIG), 61–65 (FPDTD), 100–106 (AQAPKML), 132–135 (TTTE), phenylalanine 139, and arginine 142.

The protein belongs to the IspF family. Homotrimer. Requires a divalent metal cation as cofactor.

The catalysed reaction is 4-CDP-2-C-methyl-D-erythritol 2-phosphate = 2-C-methyl-D-erythritol 2,4-cyclic diphosphate + CMP. It functions in the pathway isoprenoid biosynthesis; isopentenyl diphosphate biosynthesis via DXP pathway; isopentenyl diphosphate from 1-deoxy-D-xylulose 5-phosphate: step 4/6. Involved in the biosynthesis of isopentenyl diphosphate (IPP) and dimethylallyl diphosphate (DMAPP), two major building blocks of isoprenoid compounds. Catalyzes the conversion of 4-diphosphocytidyl-2-C-methyl-D-erythritol 2-phosphate (CDP-ME2P) to 2-C-methyl-D-erythritol 2,4-cyclodiphosphate (ME-CPP) with a corresponding release of cytidine 5-monophosphate (CMP). This is 2-C-methyl-D-erythritol 2,4-cyclodiphosphate synthase from Erwinia tasmaniensis (strain DSM 17950 / CFBP 7177 / CIP 109463 / NCPPB 4357 / Et1/99).